The following is a 210-amino-acid chain: Imidazoleglycerol-phosphate dehydratase (210 aa).

The protein belongs to the imidazoleglycerol-phosphate dehydratase family.

It is found in the cytoplasm. The catalysed reaction is D-erythro-1-(imidazol-4-yl)glycerol 3-phosphate = 3-(imidazol-4-yl)-2-oxopropyl phosphate + H2O. It functions in the pathway amino-acid biosynthesis; L-histidine biosynthesis; L-histidine from 5-phospho-alpha-D-ribose 1-diphosphate: step 6/9. The chain is Imidazoleglycerol-phosphate dehydratase from Acidovorax ebreus (strain TPSY) (Diaphorobacter sp. (strain TPSY)).